Consider the following 209-residue polypeptide: Cytidylate kinase (209 aa).

G9 to T17 is a binding site for ATP.

Belongs to the cytidylate kinase family. Type 1 subfamily.

The protein resides in the cytoplasm. It carries out the reaction CMP + ATP = CDP + ADP. It catalyses the reaction dCMP + ATP = dCDP + ADP. The protein is Cytidylate kinase of Granulibacter bethesdensis (strain ATCC BAA-1260 / CGDNIH1).